The sequence spans 692 residues: Translation initiation factor IF-2 (692 aa).

Residues 51–114 (KAKPENAKKG…KPAETPGKIT (64 aa)) are disordered. The span at 59–84 (KGQNQKQSNNQQQNRQKQNQKNQSKP) shows a compositional bias: low complexity. The segment covering 85–94 (NKNKKQKGPK) has biased composition (basic residues). The region spanning 193-362 (ERPAVVTIMG…LLVSEVEELK (170 aa)) is the tr-type G domain. The segment at 202 to 209 (GHVDHGKT) is G1. Residue 202–209 (GHVDHGKT) participates in GTP binding. The segment at 227-231 (GITQH) is G2. Positions 248 to 251 (DTPG) are G3. GTP contacts are provided by residues 248-252 (DTPGH) and 302-305 (NKMD). Residues 302 to 305 (NKMD) are G4. The tract at residues 338 to 340 (SAI) is G5.

The protein belongs to the TRAFAC class translation factor GTPase superfamily. Classic translation factor GTPase family. IF-2 subfamily.

It is found in the cytoplasm. Its function is as follows. One of the essential components for the initiation of protein synthesis. Protects formylmethionyl-tRNA from spontaneous hydrolysis and promotes its binding to the 30S ribosomal subunits. Also involved in the hydrolysis of GTP during the formation of the 70S ribosomal complex. The sequence is that of Translation initiation factor IF-2 from Oceanobacillus iheyensis (strain DSM 14371 / CIP 107618 / JCM 11309 / KCTC 3954 / HTE831).